Reading from the N-terminus, the 241-residue chain is Carboxy-S-adenosyl-L-methionine synthase (241 aa).

S-adenosyl-L-methionine-binding positions include tyrosine 38, 63–65 (GCS), 88–89 (DN), 116–117 (DI), asparagine 131, and arginine 198.

Belongs to the class I-like SAM-binding methyltransferase superfamily. Cx-SAM synthase family. As to quaternary structure, homodimer.

It catalyses the reaction prephenate + S-adenosyl-L-methionine = carboxy-S-adenosyl-L-methionine + 3-phenylpyruvate + H2O. Catalyzes the conversion of S-adenosyl-L-methionine (SAM) to carboxy-S-adenosyl-L-methionine (Cx-SAM). The protein is Carboxy-S-adenosyl-L-methionine synthase of Haemophilus influenzae (strain PittGG).